A 396-amino-acid chain; its full sequence is Flavohemoprotein (396 aa).

In terms of domain architecture, Globin spans 1-136 (MLDAQTIATV…LANVFIHREA (136 aa)). Residue histidine 85 coordinates heme b. Active-site charge relay system residues include tyrosine 95 and glutamate 135. The tract at residues 147 to 396 (GGWEGTRPFR…YECFGPHKVL (250 aa)) is reductase. The region spanning 150 to 255 (EGTRPFRIVA…AAPAGDFFMN (106 aa)) is the FAD-binding FR-type domain. Residues tyrosine 188 and 204–207 (RQYS) each bind FAD. NADP(+) is bound at residue 268 to 273 (GVGQTP). FAD is bound at residue 389 to 392 (CFGP).

The protein belongs to the globin family. Two-domain flavohemoproteins subfamily. It in the C-terminal section; belongs to the flavoprotein pyridine nucleotide cytochrome reductase family. In terms of assembly, monomer. Heme b serves as cofactor. FAD is required as a cofactor.

The catalysed reaction is 2 nitric oxide + NADPH + 2 O2 = 2 nitrate + NADP(+) + H(+). The enzyme catalyses 2 nitric oxide + NADH + 2 O2 = 2 nitrate + NAD(+) + H(+). In terms of biological role, is involved in NO detoxification in an aerobic process, termed nitric oxide dioxygenase (NOD) reaction that utilizes O(2) and NAD(P)H to convert NO to nitrate, which protects the bacterium from various noxious nitrogen compounds. Therefore, plays a central role in the inducible response to nitrosative stress. This Salmonella typhimurium (strain LT2 / SGSC1412 / ATCC 700720) protein is Flavohemoprotein (hmp).